The primary structure comprises 347 residues: Bombesin receptor-activated protein C6orf89 homolog (347 aa).

Residues 1-58 (MDLAANEISIYDKLSETVDLVRQTGHQCGMSEKAIEKFIRQLLEKNEPQRPPPQYPLL) are Cytoplasmic-facing. The chain crosses the membrane as a helical span at residues 59-79 (IVVYKVLATLGLILLTAYFVI). Residues 80 to 347 (QPFSPLAPEP…ICDGTAFSEL (268 aa)) are Extracellular-facing.

In terms of assembly, homodimer. Interacts with BRS3. Interacts (via N-terminus) with SIN3B. Glycosylated.

The protein localises to the golgi apparatus membrane. The protein resides in the cytoplasm. In terms of biological role, exhibits histone deacetylase (HDAC) enhancer properties. May play a role in cell cycle progression and wound repair of bronchial epithelial cells. In Pongo abelii (Sumatran orangutan), this protein is Bombesin receptor-activated protein C6orf89 homolog.